Consider the following 477-residue polypeptide: uncharacterized protein (477 aa).

The first 18 residues, 1–18, serve as a signal peptide directing secretion; sequence MWTALVLVWISSVPLSRS. Over 19–427 the chain is Extracellular; that stretch reads HTVPAVPRHL…DPLTPSLVNK (409 aa). N-linked (GlcNAc...) asparagine glycosylation is found at N40, N51, and N77. Disordered stretches follow at residues 79–103, 239–366, and 378–398; these read TRVT…GTAD, GTIN…TGGP, and KATA…DVKV. Positions 85–97 are enriched in low complexity; that stretch reads TTPHGTNTSTPTT. 2 stretches are compositionally biased toward polar residues: residues 253 to 288 and 298 to 309; these read PAKS…QPVH and PSNTTLEPNTPK. N-linked (GlcNAc...) asparagine glycosylation occurs at N300. 3 stretches are compositionally biased toward low complexity: residues 310-326, 348-361, and 378-393; these read SVAS…QVQT, TSPT…LPTQ, and KATA…SRSS. The helical transmembrane segment at 428 to 448 threads the bilayer; it reads MFLLVVLIVGVTLFIAVLMMF. Topologically, residues 449–477 are cytoplasmic; it reads ALQAYESYKKKDYTQVDYLINGMYADSEM.

It is found in the cell membrane. The protein resides in the golgi apparatus. Its subcellular location is the trans-Golgi network membrane. This is an uncharacterized protein from Rattus norvegicus (Rat).